We begin with the raw amino-acid sequence, 530 residues long: Pre-mRNA-splicing factor PRP9 (530 aa).

The segment at 280–310 (IYCPFCSRWFKTSSVFESHLVGKIHKKNESK) adopts a Matrin-type 1 zinc-finger fold. The tract at residues 367-388 (DSTEKEGAEQVDGEQRDGQLQE) is disordered. Over residues 368-388 (STEKEGAEQVDGEQRDGQLQE) the composition is skewed to basic and acidic residues. The Matrin-type 2 zinc-finger motif lies at 421–452 (YRCEICSNKVYNGRRTFERHFNEERHIYHLRC). The disordered stretch occupies residues 488–516 (AVPPKPNPSQLKVPTELELEEEDEEGNVM). Residues 504 to 513 (LELEEEDEEG) are compositionally biased toward acidic residues.

The protein belongs to the SF3A3 family. Belongs to the CWC complex (or CEF1-associated complex), a spliceosome sub-complex reminiscent of a late-stage spliceosome composed of the U2, U5 and U6 snRNAs and at least BUD13, BUD31, BRR2, CDC40, CEF1, CLF1, CUS1, CWC2, CWC15, CWC21, CWC22, CWC23, CWC24, CWC25, CWC27, ECM2, HSH155, IST3, ISY1, LEA1, MSL1, NTC20, PRP8, PRP9, PRP11, PRP19, PRP21, PRP22, PRP45, PRP46, SLU7, SMB1, SMD1, SMD2, SMD3, SMX2, SMX3, SNT309, SNU114, SPP2, SYF1, SYF2, RSE1 and YJU2.

It localises to the nucleus. In terms of biological role, mRNA splicing factors, PRP9, PRP11, and PRP21, are necessary for binding of the U2 snRNP to the pre-mRNA in an early step of spliceosome assembly. This is Pre-mRNA-splicing factor PRP9 (PRP9) from Saccharomyces cerevisiae (strain ATCC 204508 / S288c) (Baker's yeast).